Consider the following 156-residue polypeptide: ATP synthase subunit b (156 aa).

Residues 11 to 31 (AIAFVLFVLFCMKYVWPPLMA) form a helical membrane-spanning segment.

Belongs to the ATPase B chain family. In terms of assembly, F-type ATPases have 2 components, F(1) - the catalytic core - and F(0) - the membrane proton channel. F(1) has five subunits: alpha(3), beta(3), gamma(1), delta(1), epsilon(1). F(0) has three main subunits: a(1), b(2) and c(10-14). The alpha and beta chains form an alternating ring which encloses part of the gamma chain. F(1) is attached to F(0) by a central stalk formed by the gamma and epsilon chains, while a peripheral stalk is formed by the delta and b chains.

It is found in the cell inner membrane. F(1)F(0) ATP synthase produces ATP from ADP in the presence of a proton or sodium gradient. F-type ATPases consist of two structural domains, F(1) containing the extramembraneous catalytic core and F(0) containing the membrane proton channel, linked together by a central stalk and a peripheral stalk. During catalysis, ATP synthesis in the catalytic domain of F(1) is coupled via a rotary mechanism of the central stalk subunits to proton translocation. Functionally, component of the F(0) channel, it forms part of the peripheral stalk, linking F(1) to F(0). This is ATP synthase subunit b from Shigella boydii serotype 18 (strain CDC 3083-94 / BS512).